Reading from the N-terminus, the 175-residue chain is ATP synthase subunit b (175 aa).

Residues 20 to 40 (LIFWTAVTFVIVLVILKKIAW) form a helical membrane-spanning segment.

This sequence belongs to the ATPase B chain family. In terms of assembly, F-type ATPases have 2 components, F(1) - the catalytic core - and F(0) - the membrane proton channel. F(1) has five subunits: alpha(3), beta(3), gamma(1), delta(1), epsilon(1). F(0) has four main subunits: a(1), b(2) and c(10-14). The alpha and beta chains form an alternating ring which encloses part of the gamma chain. F(1) is attached to F(0) by a central stalk formed by the gamma and epsilon chains, while a peripheral stalk is formed by the delta and b chains.

The protein localises to the cell inner membrane. Its function is as follows. F(1)F(0) ATP synthase produces ATP from ADP in the presence of a proton or sodium gradient. F-type ATPases consist of two structural domains, F(1) containing the extramembraneous catalytic core and F(0) containing the membrane proton channel, linked together by a central stalk and a peripheral stalk. During catalysis, ATP synthesis in the catalytic domain of F(1) is coupled via a rotary mechanism of the central stalk subunits to proton translocation. In terms of biological role, component of the F(0) channel, it forms part of the peripheral stalk, linking F(1) to F(0). This chain is ATP synthase subunit b, found in Chlorobaculum parvum (strain DSM 263 / NCIMB 8327) (Chlorobium vibrioforme subsp. thiosulfatophilum).